Consider the following 245-residue polypeptide: Pyridoxine 5'-phosphate synthase (245 aa).

Asn7 is a 3-amino-2-oxopropyl phosphate binding site. Residue 9–10 participates in 1-deoxy-D-xylulose 5-phosphate binding; the sequence is DH. A 3-amino-2-oxopropyl phosphate-binding site is contributed by Arg18. Residue His43 is the Proton acceptor of the active site. Residues Arg45 and His50 each contribute to the 1-deoxy-D-xylulose 5-phosphate site. Glu70 serves as the catalytic Proton acceptor. Thr100 is a 1-deoxy-D-xylulose 5-phosphate binding site. Catalysis depends on His190, which acts as the Proton donor. 3-amino-2-oxopropyl phosphate is bound by residues Gly191 and 212-213; that span reads GH.

The protein belongs to the PNP synthase family. Homooctamer; tetramer of dimers.

Its subcellular location is the cytoplasm. It carries out the reaction 3-amino-2-oxopropyl phosphate + 1-deoxy-D-xylulose 5-phosphate = pyridoxine 5'-phosphate + phosphate + 2 H2O + H(+). It functions in the pathway cofactor biosynthesis; pyridoxine 5'-phosphate biosynthesis; pyridoxine 5'-phosphate from D-erythrose 4-phosphate: step 5/5. Catalyzes the complicated ring closure reaction between the two acyclic compounds 1-deoxy-D-xylulose-5-phosphate (DXP) and 3-amino-2-oxopropyl phosphate (1-amino-acetone-3-phosphate or AAP) to form pyridoxine 5'-phosphate (PNP) and inorganic phosphate. The protein is Pyridoxine 5'-phosphate synthase of Prochlorococcus marinus (strain MIT 9303).